A 418-amino-acid polypeptide reads, in one-letter code: Tyrosine--tRNA ligase (418 aa).

Y34 contributes to the L-tyrosine binding site. Positions 39–48 (PTADSLHLGH) match the 'HIGH' region motif. Residues Y169 and Q173 each contribute to the L-tyrosine site. A 'KMSKS' region motif is present at residues 229–233 (KFGKS). K232 contributes to the ATP binding site. Positions 352-418 (LNIVDMLVTA…GKKKYAVLTY (67 aa)) constitute an S4 RNA-binding domain.

The protein belongs to the class-I aminoacyl-tRNA synthetase family. TyrS type 1 subfamily. In terms of assembly, homodimer.

It is found in the cytoplasm. The catalysed reaction is tRNA(Tyr) + L-tyrosine + ATP = L-tyrosyl-tRNA(Tyr) + AMP + diphosphate + H(+). Catalyzes the attachment of tyrosine to tRNA(Tyr) in a two-step reaction: tyrosine is first activated by ATP to form Tyr-AMP and then transferred to the acceptor end of tRNA(Tyr). This Streptococcus equi subsp. zooepidemicus (strain H70) protein is Tyrosine--tRNA ligase.